The sequence spans 1006 residues: DNA polymerase (1006 aa).

The protein belongs to the DNA polymerase type-B family. Interacts with OPG148/A20. Component of the Uracil-DNA glycosylase(UDG)-OPG148/A20-polymerase complex; OPG148/A20 and OPG116/UDG form a heterodimeric processivity factor that associates with OPG071/E9 to form the processive polymerase holoenzyme.

The enzyme catalyses DNA(n) + a 2'-deoxyribonucleoside 5'-triphosphate = DNA(n+1) + diphosphate. Functionally, catalyzes DNA synthesis. Acquires processivity by associating with a heterodimeric processivity factor comprised of the viral OPG148/A20 and OPG116/D4 proteins, thereby forming the DNA polymerase holoenzyme. Displays 3'- to 5' exonuclease activity. Might participate in viral DNA recombination. Does not perform OPG116/D4synthesis across an abasic site. The chain is DNA polymerase (OPG071) from Bos taurus (Bovine).